A 535-amino-acid polypeptide reads, in one-letter code: Putative cysteine ligase BshC (535 aa).

Positions 420–477 form a coiled coil; sequence DTFKALKESINSAYKNLQEKLAPLGADFQKLTGENLGRVMAQVKYLEERAQKYHREKN.

This sequence belongs to the BshC family.

Involved in bacillithiol (BSH) biosynthesis. May catalyze the last step of the pathway, the addition of cysteine to glucosamine malate (GlcN-Mal) to generate BSH. This Carboxydothermus hydrogenoformans (strain ATCC BAA-161 / DSM 6008 / Z-2901) protein is Putative cysteine ligase BshC.